The primary structure comprises 146 residues: Mite group 2 allergen Der p 2 (146 aa).

The first 17 residues, 1 to 17, serve as a signal peptide directing secretion; the sequence is MMYKILCLSLLVAAVAR. Intrachain disulfides connect Cys-25/Cys-136, Cys-38/Cys-44, and Cys-90/Cys-95.

Belongs to the NPC2 family.

The protein resides in the secreted. The chain is Mite group 2 allergen Der p 2 (DERP2) from Dermatophagoides pteronyssinus (European house dust mite).